A 509-amino-acid polypeptide reads, in one-letter code: Lysine--tRNA ligase (509 aa).

Mg(2+)-binding residues include Glu418 and Glu425.

The protein belongs to the class-II aminoacyl-tRNA synthetase family. As to quaternary structure, homodimer. The cofactor is Mg(2+).

It localises to the cytoplasm. It catalyses the reaction tRNA(Lys) + L-lysine + ATP = L-lysyl-tRNA(Lys) + AMP + diphosphate. This chain is Lysine--tRNA ligase, found in Acinetobacter baumannii (strain AB307-0294).